The following is a 129-amino-acid chain: Large ribosomal subunit protein bL17 (129 aa).

The protein belongs to the bacterial ribosomal protein bL17 family. Part of the 50S ribosomal subunit. Contacts protein L32.

The polypeptide is Large ribosomal subunit protein bL17 (Stutzerimonas stutzeri (strain A1501) (Pseudomonas stutzeri)).